The following is a 424-amino-acid chain: L-glutamine:2-deoxy-scyllo-inosose aminotransferase (424 aa).

Lysine 202 carries the N6-(pyridoxal phosphate)lysine modification.

The protein belongs to the DegT/DnrJ/EryC1 family. L-glutamine:2-deoxy-scyllo-inosose/scyllo-inosose aminotransferase subfamily. Pyridoxal 5'-phosphate serves as cofactor.

It carries out the reaction 2-deoxy-L-scyllo-inosose + L-glutamine = 2-deoxy-scyllo-inosamine + 2-oxoglutaramate. It catalyses the reaction 3-amino-2,3-dideoxy-scyllo-inosose + L-glutamine = 2-deoxystreptamine + 2-oxoglutaramate. It participates in metabolic intermediate biosynthesis; 2-deoxystreptamine biosynthesis; 2-deoxystreptamine from D-glucose 6-phosphate: step 2/4. The protein operates within antibiotic biosynthesis; tobramycin biosynthesis. Its function is as follows. Catalyzes the PLP-dependent transamination of 2-deoxy-scyllo-inosose (2-DOI) to form 2-deoxy-scyllo-inosamine (2-DOIA) using L-glutamine as the amino donor. Also catalyzes the transamination of 3-amino-2,3-dideoxy-scyllo-inosose (keto-2-DOIA) into 2-deoxystreptamine (2-DOS). This chain is L-glutamine:2-deoxy-scyllo-inosose aminotransferase (tbmB), found in Streptoalloteichus tenebrarius (strain ATCC 17920 / DSM 40477 / JCM 4838 / CBS 697.72 / NBRC 16177 / NCIMB 11028 / NRRL B-12390 / A12253. 1 / ISP 5477) (Streptomyces tenebrarius).